A 312-amino-acid polypeptide reads, in one-letter code: Ankyrin repeat family A protein 2 (312 aa).

5 ANK repeats span residues 147 to 179, 180 to 212, 213 to 245, 246 to 278, and 279 to 312; these read ANSL…HTDE, EGFT…LLGK, GRES…EYDW, NGGT…IETD, and SGYN…NIRE.

As to quaternary structure, interacts (via ANK repeats) with CCDC8 (via PxLPxI/L motif); mediates the interaction with the 3M complex which is composed of CCDC8, CUL7 and OBSL1. Interacts (via ANK repeats) with HDAC4 (via PxLPxI/L motif). Interacts (via ANK repeats) with HDAC5 (via PxLPxI/L motif). Interacts (via ANK repeats) with LRP2/megalin (via PxLPxI/L motif). Interacts (via ANK repeats) with RFX7 (via PxLPxI/L motif). Interacts with AHRR. Interacts with NEK6.

The protein resides in the cytoplasm. It is found in the cytoskeleton. The protein localises to the membrane. Its function is as follows. May regulate the interaction between the 3M complex and the histone deacetylases HDAC4 and HDAC5. May also regulate LRP2/megalin. The polypeptide is Ankyrin repeat family A protein 2 (Ankra2) (Mus musculus (Mouse)).